The primary structure comprises 199 residues: Pyridoxal 5'-phosphate synthase subunit PdxT (199 aa).

49-51 (GES) is a binding site for L-glutamine. The active-site Nucleophile is the C81. L-glutamine is bound by residues R110 and 139-140 (IR). Active-site charge relay system residues include H175 and E177.

The protein belongs to the glutaminase PdxT/SNO family. As to quaternary structure, in the presence of PdxS, forms a dodecamer of heterodimers. Only shows activity in the heterodimer.

The catalysed reaction is aldehydo-D-ribose 5-phosphate + D-glyceraldehyde 3-phosphate + L-glutamine = pyridoxal 5'-phosphate + L-glutamate + phosphate + 3 H2O + H(+). It carries out the reaction L-glutamine + H2O = L-glutamate + NH4(+). Its pathway is cofactor biosynthesis; pyridoxal 5'-phosphate biosynthesis. Catalyzes the hydrolysis of glutamine to glutamate and ammonia as part of the biosynthesis of pyridoxal 5'-phosphate. The resulting ammonia molecule is channeled to the active site of PdxS. This is Pyridoxal 5'-phosphate synthase subunit PdxT from Frankia alni (strain DSM 45986 / CECT 9034 / ACN14a).